The chain runs to 311 residues: MVSRGPDEWLETIKKCQALTENEMKQLCEMVKELLMEESNIQPVQTPVTVCGDIHGQFHDLLELFRTAGGFPDDINYIFLGDYVDRGYYSLETFTLLMCLKVKYPAKITLVRGNHESRQITQVYGFYEECLNKYGSTTVWKYCCQVFDFLTLAAIIDGKILCVHGGLSPEIRMLDQIRVLSRAQEVPHEGGFSDLLWSDPDNVEAWQVSPRGAGWLFGSKVAREFNHVNGLNLIARAHQLVMEGFKYHFPEKDVVTVWSAPNYCYRCGNVASVMKVDEDLEPTFKIFSAVPDDYIRESTANHNNQRAGYFL.

Residues Asp53, His55, Asp82, and Asn114 each contribute to the Mn(2+) site. The Proton donor role is filled by His115. 2 residues coordinate Mn(2+): His164 and His238.

It belongs to the PPP phosphatase family. PP-6 (PP-V) subfamily. Inactivated in a complex with phosphatase methylesterase PPE1 (PP2Ai). Interacts with phosphatase 2A activator RRD1, which can reactivate PP2Ai by dissociating the catalytic subunit from the complex. Forms a ternary complex with RRD1-TAP42. Mn(2+) is required as a cofactor.

It is found in the cytoplasm. It carries out the reaction O-phospho-L-seryl-[protein] + H2O = L-seryl-[protein] + phosphate. The enzyme catalyses O-phospho-L-threonyl-[protein] + H2O = L-threonyl-[protein] + phosphate. Involved in the dephosphorylation of the large subunit of RNA polymerase II. Is required in late G1 for normal G1 cyclin expression, bud initiation and expression of certain genes that are periodically expressed during late G1. Associates with the SAP proteins in a cell cycle-dependent manner. This is Serine/threonine-protein phosphatase PP1-1 (SIT4) from Saccharomyces cerevisiae (strain ATCC 204508 / S288c) (Baker's yeast).